Consider the following 894-residue polypeptide: Tyrosine-protein kinase receptor UFO (894 aa).

An N-terminal signal peptide occupies residues 1–25; sequence MAWRCPRMGRVPLAWCLALCGWACM. Positions 26–92 are interaction with GAS6; sequence APRGTQAEES…QTQVPLGEDE (67 aa). The Extracellular segment spans residues 26–451; that stretch reads APRGTQAEES…STPAFSWPWW (426 aa). 2 Ig-like C2-type domains span residues 27–128 and 139–222; these read PRGT…TFVS and PYFL…ATIT. Asn-43 carries N-linked (GlcNAc...) asparagine glycosylation. The cysteines at positions 56 and 117 are disulfide-linked. Residues Asn-157 and Asn-198 are each glycosylated (N-linked (GlcNAc...) asparagine). Cys-160 and Cys-205 are joined by a disulfide. Fibronectin type-III domains follow at residues 227 to 331 and 336 to 428; these read QPRN…TPEG and PPEN…AWRP. 3 N-linked (GlcNAc...) asparagine glycosylation sites follow: Asn-339, Asn-345, and Asn-401. Residues 452–472 traverse the membrane as a helical segment; the sequence is YVLLGAVVAAACVLILALFLV. At 473 to 894 the chain is on the cytoplasmic side; the sequence is HRRKKETRYG…PAAPGQEDGA (422 aa). The region spanning 536-807 is the Protein kinase domain; that stretch reads VALGKTLGEG…ELREDLENTL (272 aa). ATP is bound by residues 542–550 and Lys-567; that span reads LGEGEFGAV. Asp-672 serves as the catalytic Proton acceptor. A phosphotyrosine; by autocatalysis mark is found at Tyr-703, Tyr-779, and Tyr-821. 2 disordered regions span residues 823-853 and 866-894; these read NMDE…DSCS and YVLC…EDGA. The residue at position 866 (Tyr-866) is a Phosphotyrosine; by autocatalysis. Ser-884 is subject to Phosphoserine.

It belongs to the protein kinase superfamily. Tyr protein kinase family. AXL/UFO subfamily. Heterodimer and heterotetramer with ligand GAS6. Interacts with CBL, GRB2, LCK, NCK2, PIK3R1, PIK3R2, PIK3R3, PLCG1, SOCS1 and TNS2. Part of a complex including AXL, TNK2 and GRB2, in which GRB2 promotes AXL recruitment by TNK2. In terms of processing, monoubiquitinated upon GAS6-binding. A very small proportion of the receptor could be subjected to polyubiquitination in a very transient fashion. Post-translationally, phosphorylated at tyrosine residues by autocatalysis, which activates kinase activity. Highly expressed in metastatic colon tumors. Expressed in primary colon tumors. Weakly expressed in normal colon tissue.

It is found in the cell membrane. It catalyses the reaction L-tyrosyl-[protein] + ATP = O-phospho-L-tyrosyl-[protein] + ADP + H(+). Its activity is regulated as follows. Activated by GAS6-binding and subsequent autophosphorylation. Functionally, receptor tyrosine kinase that transduces signals from the extracellular matrix into the cytoplasm by binding growth factor GAS6 and which is thus regulating many physiological processes including cell survival, cell proliferation, migration and differentiation. Ligand binding at the cell surface induces dimerization and autophosphorylation of AXL. Following activation by ligand, AXL binds and induces tyrosine phosphorylation of PI3-kinase subunits PIK3R1, PIK3R2 and PIK3R3; but also GRB2, PLCG1, LCK and PTPN11. Other downstream substrate candidates for AXL are CBL, NCK2, SOCS1 and TNS2. Recruitment of GRB2 and phosphatidylinositol 3 kinase regulatory subunits by AXL leads to the downstream activation of the AKT kinase. GAS6/AXL signaling plays a role in various processes such as endothelial cell survival during acidification by preventing apoptosis, optimal cytokine signaling during human natural killer cell development, hepatic regeneration, gonadotropin-releasing hormone neuron survival and migration, platelet activation, or regulation of thrombotic responses. Also plays an important role in inhibition of Toll-like receptors (TLRs)-mediated innate immune response. (Microbial infection) Acts as a receptor for lassa virus and lymphocytic choriomeningitis virus, possibly through GAS6 binding to phosphatidyl-serine at the surface of virion envelope. Its function is as follows. (Microbial infection) Acts as a receptor for Ebolavirus, possibly through GAS6 binding to phosphatidyl-serine at the surface of virion envelope. In terms of biological role, (Microbial infection) Promotes Zika virus entry in glial cells, Sertoli cells and astrocytes. Additionally, Zika virus potentiates AXL kinase activity to antagonize type I interferon signaling and thereby promotes infection. Interferon signaling inhibition occurs via an SOCS1-dependent mechanism. The polypeptide is Tyrosine-protein kinase receptor UFO (AXL) (Homo sapiens (Human)).